The chain runs to 47 residues: Cytochrome b559 subunit beta (47 aa).

A helical membrane pass occupies residues 23-39; sequence WLAVHALAIPSVFFLGA. Residue His-27 coordinates heme.

It belongs to the PsbE/PsbF family. As to quaternary structure, heterodimer of an alpha subunit and a beta subunit. PSII is composed of 1 copy each of membrane proteins PsbA, PsbB, PsbC, PsbD, PsbE, PsbF, PsbH, PsbI, PsbJ, PsbK, PsbL, PsbM, PsbT, PsbX, PsbY, Psb30/Ycf12, peripheral proteins PsbO, CyanoQ (PsbQ), PsbU, PsbV and a large number of cofactors. It forms dimeric complexes. Heme b is required as a cofactor.

It is found in the cellular thylakoid membrane. This b-type cytochrome is tightly associated with the reaction center of photosystem II (PSII). PSII is a light-driven water:plastoquinone oxidoreductase that uses light energy to abstract electrons from H(2)O, generating O(2) and a proton gradient subsequently used for ATP formation. It consists of a core antenna complex that captures photons, and an electron transfer chain that converts photonic excitation into a charge separation. This Prochlorococcus marinus subsp. pastoris (strain CCMP1986 / NIES-2087 / MED4) protein is Cytochrome b559 subunit beta.